Consider the following 284-residue polypeptide: Protein phosphatase 1 regulatory subunit 3B (284 aa).

The PP1-binding motif motif lies at 61–64 (RVSF). One can recognise a CBM21 domain in the interval 124–232 (RNRLQTNHVC…SNKGKNYRIT (109 aa)). Ser260 is subject to Phosphoserine.

As to quaternary structure, interacts with glycogen, PPP1CC catalytic subunit of PP1 and PYGL. Associates with glycogen particles. Forms complexes with debranching enzyme, glycogen phosphorylase, glycogen synthase and phosphorylase kinase which is necessary for its regulation of PP1 activity. Highly expressed in liver. Moderately expressed in kidney, heart, testis, spleen and lung. Weakly expressed in skeletal muscle (at protein level). Expressed predominantly in liver. Expressed moderately in heart. Expressed weakly in lung, kidney, spleen and skeletal muscle.

Functionally, acts as a glycogen-targeting subunit for phosphatase PP1. Facilitates interaction of the PP1 with enzymes of the glycogen metabolism and regulates its activity. Suppresses the rate at which PP1 dephosphorylates (inactivates) glycogen phosphorylase and enhances the rate at which it activates glycogen synthase and therefore limits glycogen breakdown. Its activity is inhibited by PYGL, resulting in inhibition of the glycogen synthase and glycogen phosphorylase phosphatase activities of PP1. Dramatically increases basal and insulin-stimulated glycogen synthesis upon overexpression in hepatocytes. This is Protein phosphatase 1 regulatory subunit 3B (Ppp1r3b) from Rattus norvegicus (Rat).